A 268-amino-acid polypeptide reads, in one-letter code: Undecaprenyl-diphosphatase (268 aa).

Transmembrane regions (helical) follow at residues 3 to 23 (VFNL…EFIP), 46 to 66 (FEVL…SAKL), 84 to 104 (FGIL…HGFI), 107 to 127 (VLFE…FILL), 144 to 164 (YPLP…IPGV), 184 to 204 (AAEF…AYDL), 218 to 238 (LIGV…RYLL), and 248 to 268 (LFGW…LVWG).

This sequence belongs to the UppP family.

The protein resides in the cell inner membrane. The catalysed reaction is di-trans,octa-cis-undecaprenyl diphosphate + H2O = di-trans,octa-cis-undecaprenyl phosphate + phosphate + H(+). Its function is as follows. Catalyzes the dephosphorylation of undecaprenyl diphosphate (UPP). Confers resistance to bacitracin. The polypeptide is Undecaprenyl-diphosphatase (Brucella anthropi (strain ATCC 49188 / DSM 6882 / CCUG 24695 / JCM 21032 / LMG 3331 / NBRC 15819 / NCTC 12168 / Alc 37) (Ochrobactrum anthropi)).